The following is a 397-amino-acid chain: Cathepsin E-A (397 aa).

The N-terminal stretch at 1 to 16 is a signal peptide; it reads MRQILVLLLFATLVYG. Positions 17–52 are cleaved as a propeptide — activation peptide; the sequence is LIRVPLKRQKSIRKTLKEKGKLSHIWTQQGIDMVQY. Residues 74-385 enclose the Peptidase A1 domain; sequence YFGEISVGTP…DRGNNRVGLA (312 aa). N-linked (GlcNAc...) asparagine glycosylation occurs at asparagine 86. Residue aspartate 92 is part of the active site. An intrachain disulfide couples cysteine 105 to cysteine 110. Asparagine 130 carries an N-linked (GlcNAc...) asparagine glycan. An intrachain disulfide couples cysteine 268 to cysteine 272. The active site involves aspartate 277. Cysteine 310 and cysteine 344 are joined by a disulfide.

It belongs to the peptidase A1 family. Homodimer; disulfide-linked. Post-translationally, glycosylated. Contains high mannose-type oligosaccharide. In terms of tissue distribution, expressed predominantly in the larval foregut and the anterior and posterior adult stomach.

It localises to the endosome. It carries out the reaction Similar to cathepsin D, but slightly broader specificity.. In terms of biological role, may have a role in immune function. Probably involved in the processing of antigenic peptides during MHC class II-mediated antigen presentation. The sequence is that of Cathepsin E-A (ctse-a) from Xenopus laevis (African clawed frog).